A 231-amino-acid polypeptide reads, in one-letter code: Small ribosomal subunit protein uS3 (231 aa).

The KH type-2 domain maps to valine 39–arginine 107.

The protein belongs to the universal ribosomal protein uS3 family. Part of the 30S ribosomal subunit. Forms a tight complex with proteins S10 and S14.

Functionally, binds the lower part of the 30S subunit head. Binds mRNA in the 70S ribosome, positioning it for translation. The sequence is that of Small ribosomal subunit protein uS3 from Colwellia psychrerythraea (strain 34H / ATCC BAA-681) (Vibrio psychroerythus).